The primary structure comprises 288 residues: Homoserine kinase (288 aa).

ATP is bound at residue 79-89; that stretch reads PPARGLGSSSA.

Belongs to the GHMP kinase family. Homoserine kinase subfamily.

Its subcellular location is the cytoplasm. It carries out the reaction L-homoserine + ATP = O-phospho-L-homoserine + ADP + H(+). It functions in the pathway amino-acid biosynthesis; L-threonine biosynthesis; L-threonine from L-aspartate: step 4/5. In terms of biological role, catalyzes the ATP-dependent phosphorylation of L-homoserine to L-homoserine phosphate. The chain is Homoserine kinase from Listeria welshimeri serovar 6b (strain ATCC 35897 / DSM 20650 / CCUG 15529 / CIP 8149 / NCTC 11857 / SLCC 5334 / V8).